The chain runs to 1128 residues: GTPase-activating protein BEM3 (1128 aa).

Residues 194 to 241 (SSPTKIHSEQLASPAASVTYTTSRITIKSPNKGSKSPLQERLRSPQNP) are disordered. Polar residues predominate over residues 209–230 (ASVTYTTSRITIKSPNKGSKSP). Residue Ser-254 is modified to Phosphoserine. Disordered stretches follow at residues 345–391 (EDLV…TPLS) and 418–486 (PVLT…RPHA). Residues 366–375 (LPPPPAPPTF) show a composition bias toward pro residues. 2 stretches are compositionally biased toward polar residues: residues 382-391 (GNIKNSTPLS) and 420-478 (LTSS…QGSL). A PH domain is found at 634–741 (DNVKDGSLLL…WLSAFSDYID (108 aa)). Disordered stretches follow at residues 746–777 (LSLSSSRNANDTDSASHLSAGTHHSKFGNATI) and 796–838 (NNNI…DSRR). The segment covering 752 to 764 (RNANDTDSASHLS) has biased composition (polar residues). A compositionally biased stretch (low complexity) spans 796–815 (NNNISNSSNNIANSDGIDSN). A compositionally biased stretch (polar residues) spans 816–829 (PSSHSNFLASSSGN). The Rho-GAP domain occupies 913–1128 (LRLSSHKYQN…EKVDIHIPQV (216 aa)).

The protein localises to the cytoplasm. GTPase-activating protein (GAP) for CDC42 and less efficiently for RHO1. Negative regulator of the pheromone-response pathway through the STE20 protein kinase. The chain is GTPase-activating protein BEM3 (BEM3) from Saccharomyces cerevisiae (strain ATCC 204508 / S288c) (Baker's yeast).